The following is a 393-amino-acid chain: MQTSHYAAEKDMQDAVPRLTFTLRDEERLMMKIGVFVPIGNNGWLISTHAPQYMPTFELNKAIVQKAEHYHFDFALSMIKLRGFGGKTEFWDHNLESFTLMAGLAAVTSRIQIYATAATLTLPPAIVARMAATIDSISGGRFGVNLVTGWQKPEYEQMGIWPGDDYFSRRYDYLTEYVQVLRDLWGSGKSDFKGDFFTMNDCRVSPQPSVPMKVICAGQSDAGMAFSAQYADFNFCFGKGVNTPTAFAPTAARMKQAAEQTGRDVGSYVLFMVIADETDDAARAKWEHYKAGADEEALSWLTEQSQKDTRSGTDTNVRQMADPTSAVNINMGTLVGSYASVARMLDEVASVPGAEGVLLTFDDFLSGIETFGERIQPLMQCRAHLPALTQEVA.

Residues 79 to 80 (IK), N145, E154, 170 to 171 (RY), and S220 contribute to the FMN site.

This sequence belongs to the NtaA/SnaA/DszA monooxygenase family. RutA subfamily.

It carries out the reaction uracil + FMNH2 + NADH + O2 = (Z)-3-ureidoacrylate + FMN + NAD(+) + H2O + H(+). The catalysed reaction is thymine + FMNH2 + NADH + O2 = (Z)-2-methylureidoacrylate + FMN + NAD(+) + H2O + H(+). In terms of biological role, catalyzes the pyrimidine ring opening between N-3 and C-4 by an unusual flavin hydroperoxide-catalyzed mechanism, adding oxygen atoms in the process to yield ureidoacrylate peracid, that immediately reacts with FMN forming ureidoacrylate and FMN-N(5)-oxide. The FMN-N(5)-oxide reacts spontaneously with NADH to produce FMN. Requires the flavin reductase RutF to regenerate FMN in vivo. The polypeptide is Pyrimidine monooxygenase RutA (Escherichia coli O139:H28 (strain E24377A / ETEC)).